Here is a 142-residue protein sequence, read N- to C-terminus: Putative transcriptional regulatory protein Mevan_1098 (142 aa).

Belongs to the Tfx family.

Putative transcriptional regulator. In Methanococcus vannielii (strain ATCC 35089 / DSM 1224 / JCM 13029 / OCM 148 / SB), this protein is Putative transcriptional regulatory protein Mevan_1098.